Here is a 66-residue protein sequence, read N- to C-terminus: Protein translocase subunit SecE (66 aa).

A helical transmembrane segment spans residues leucine 41 to leucine 61.

Belongs to the SecE/SEC61-gamma family. Component of the Sec protein translocase complex. Heterotrimer consisting of SecY (alpha), SecG (beta) and SecE (gamma) subunits. The heterotrimers can form oligomers, although 1 heterotrimer is thought to be able to translocate proteins. Interacts with the ribosome. May interact with SecDF, and other proteins may be involved.

The protein localises to the cell membrane. In terms of biological role, essential subunit of the Sec protein translocation channel SecYEG. Clamps together the 2 halves of SecY. May contact the channel plug during translocation. The protein is Protein translocase subunit SecE of Archaeoglobus fulgidus (strain ATCC 49558 / DSM 4304 / JCM 9628 / NBRC 100126 / VC-16).